The primary structure comprises 154 residues: SsrA-binding protein (154 aa).

A disordered region spans residues 131-154; it reads DKRQDLKQKEAKRDIERAFKERQQ. Basic and acidic residues predominate over residues 132–154; that stretch reads KRQDLKQKEAKRDIERAFKERQQ.

This sequence belongs to the SmpB family.

It is found in the cytoplasm. In terms of biological role, required for rescue of stalled ribosomes mediated by trans-translation. Binds to transfer-messenger RNA (tmRNA), required for stable association of tmRNA with ribosomes. tmRNA and SmpB together mimic tRNA shape, replacing the anticodon stem-loop with SmpB. tmRNA is encoded by the ssrA gene; the 2 termini fold to resemble tRNA(Ala) and it encodes a 'tag peptide', a short internal open reading frame. During trans-translation Ala-aminoacylated tmRNA acts like a tRNA, entering the A-site of stalled ribosomes, displacing the stalled mRNA. The ribosome then switches to translate the ORF on the tmRNA; the nascent peptide is terminated with the 'tag peptide' encoded by the tmRNA and targeted for degradation. The ribosome is freed to recommence translation, which seems to be the essential function of trans-translation. The polypeptide is SsrA-binding protein (Listeria innocua serovar 6a (strain ATCC BAA-680 / CLIP 11262)).